Reading from the N-terminus, the 413-residue chain is MTIAPEPNSFRTGPDERGRFGIFGGRFVAETLMPLILELEAAYETAKKDPAFQAEMESYGTHYIGRPSPLYYAERLTEHLRAKAPAGQGAKVYFKREELNHTGSHKVNNVLGQILLARRMGKPRIIAETGAGQHGVATATLCARFGLKCVVYMGAVDVARQAPNVFRMKMLGAEVVPVESGTKTLKDAMNEALRDWVTNVADTFYCIGTVAGPHPYPAMVRDFQSVIGRETREQMIAQEGRIPDSLVACIGGGSNAMGLFHPFLDDREVEIFGVEAAGHGVQSGLHAASLTGGKPGVLHGNRTYLLMDGDGQIADAHSISAGLDYPGIGPEHAWLHEMGRVTYLSATDSETLEAFKLCSMLEGIIPALEPAHALSKVLELAPQRPAEHLMVMNMSGRGDKDIPQVAEIFGTKI.

Lys106 carries the post-translational modification N6-(pyridoxal phosphate)lysine.

This sequence belongs to the TrpB family. Tetramer of two alpha and two beta chains. The cofactor is pyridoxal 5'-phosphate.

The catalysed reaction is (1S,2R)-1-C-(indol-3-yl)glycerol 3-phosphate + L-serine = D-glyceraldehyde 3-phosphate + L-tryptophan + H2O. It functions in the pathway amino-acid biosynthesis; L-tryptophan biosynthesis; L-tryptophan from chorismate: step 5/5. In terms of biological role, the beta subunit is responsible for the synthesis of L-tryptophan from indole and L-serine. The protein is Tryptophan synthase beta chain of Methylobacterium radiotolerans (strain ATCC 27329 / DSM 1819 / JCM 2831 / NBRC 15690 / NCIMB 10815 / 0-1).